Here is a 321-residue protein sequence, read N- to C-terminus: Glucokinase (321 aa).

Residue 8-13 (GDVGGT) coordinates ATP.

The protein belongs to the bacterial glucokinase family.

It localises to the cytoplasm. It carries out the reaction D-glucose + ATP = D-glucose 6-phosphate + ADP + H(+). In Shigella dysenteriae serotype 1 (strain Sd197), this protein is Glucokinase.